Reading from the N-terminus, the 299-residue chain is tRNA dimethylallyltransferase (299 aa).

ATP is bound at residue 10 to 17; the sequence is GPTASGKS. A substrate-binding site is contributed by 12–17; sequence TASGKS.

Belongs to the IPP transferase family. Monomer. Mg(2+) is required as a cofactor.

The catalysed reaction is adenosine(37) in tRNA + dimethylallyl diphosphate = N(6)-dimethylallyladenosine(37) in tRNA + diphosphate. In terms of biological role, catalyzes the transfer of a dimethylallyl group onto the adenine at position 37 in tRNAs that read codons beginning with uridine, leading to the formation of N6-(dimethylallyl)adenosine (i(6)A). This is tRNA dimethylallyltransferase from Malacoplasma penetrans (strain HF-2) (Mycoplasma penetrans).